A 692-amino-acid polypeptide reads, in one-letter code: Translation initiation factor IF-2 (692 aa).

One can recognise a tr-type G domain in the interval 194–363; it reads PRPPIVTVMG…LLVAEMEDLK (170 aa). The tract at residues 203–210 is G1; it reads GHVDHGKT. Residue 203-210 participates in GTP binding; it reads GHVDHGKT. The tract at residues 228-232 is G2; that stretch reads GITQH. Residues 249-252 are G3; sequence DTPG. Residues 249–253 and 303–306 contribute to the GTP site; these read DTPGH and NKID. The G4 stretch occupies residues 303-306; the sequence is NKID. Residues 339 to 341 form a G5 region; it reads SAK.

Belongs to the TRAFAC class translation factor GTPase superfamily. Classic translation factor GTPase family. IF-2 subfamily.

It localises to the cytoplasm. Functionally, one of the essential components for the initiation of protein synthesis. Protects formylmethionyl-tRNA from spontaneous hydrolysis and promotes its binding to the 30S ribosomal subunits. Also involved in the hydrolysis of GTP during the formation of the 70S ribosomal complex. The polypeptide is Translation initiation factor IF-2 (Thermoanaerobacter sp. (strain X514)).